The following is a 299-amino-acid chain: GTP cyclohydrolase FolE2 (299 aa).

Belongs to the GTP cyclohydrolase IV family.

It catalyses the reaction GTP + H2O = 7,8-dihydroneopterin 3'-triphosphate + formate + H(+). It participates in cofactor biosynthesis; 7,8-dihydroneopterin triphosphate biosynthesis; 7,8-dihydroneopterin triphosphate from GTP: step 1/1. In terms of biological role, converts GTP to 7,8-dihydroneopterin triphosphate. The polypeptide is GTP cyclohydrolase FolE2 (Klebsiella pneumoniae).